The primary structure comprises 358 residues: 3-dehydroquinate synthase (358 aa).

Residues 102–106, 126–127, lysine 139, and lysine 148 each bind NAD(+); these read GVVGD and TT. Glutamate 181, histidine 244, and histidine 260 together coordinate Zn(2+).

The protein belongs to the sugar phosphate cyclases superfamily. Dehydroquinate synthase family. Requires Co(2+) as cofactor. Zn(2+) is required as a cofactor. The cofactor is NAD(+).

The protein localises to the cytoplasm. The enzyme catalyses 7-phospho-2-dehydro-3-deoxy-D-arabino-heptonate = 3-dehydroquinate + phosphate. It participates in metabolic intermediate biosynthesis; chorismate biosynthesis; chorismate from D-erythrose 4-phosphate and phosphoenolpyruvate: step 2/7. Catalyzes the conversion of 3-deoxy-D-arabino-heptulosonate 7-phosphate (DAHP) to dehydroquinate (DHQ). The sequence is that of 3-dehydroquinate synthase from Symbiobacterium thermophilum (strain DSM 24528 / JCM 14929 / IAM 14863 / T).